The following is a 447-amino-acid chain: Methyl-coenzyme M reductase II subunit beta (447 aa).

Y368 lines the coenzyme M pocket. Residue G370 coordinates coenzyme B.

The protein belongs to the methyl-coenzyme M reductase beta subunit family. As to quaternary structure, MCR is a hexamer of two alpha, two beta, and two gamma chains, forming a dimer of heterotrimers. Coenzyme F430 is required as a cofactor.

It carries out the reaction coenzyme B + methyl-coenzyme M = methane + coenzyme M-coenzyme B heterodisulfide. It functions in the pathway one-carbon metabolism; methyl-coenzyme M reduction; methane from methyl-coenzyme M: step 1/1. Its function is as follows. Component of the methyl-coenzyme M reductase (MCR) I that catalyzes the reductive cleavage of methyl-coenzyme M (CoM-S-CH3 or 2-(methylthio)ethanesulfonate) using coenzyme B (CoB or 7-mercaptoheptanoylthreonine phosphate) as reductant which results in the production of methane and the mixed heterodisulfide of CoB and CoM (CoM-S-S-CoB). This is the final step in methanogenesis. The chain is Methyl-coenzyme M reductase II subunit beta (mrtB) from Methanocaldococcus jannaschii (strain ATCC 43067 / DSM 2661 / JAL-1 / JCM 10045 / NBRC 100440) (Methanococcus jannaschii).